A 398-amino-acid polypeptide reads, in one-letter code: Succinate--CoA ligase [ADP-forming] subunit beta (398 aa).

An ATP-grasp domain is found at lysine 9 to glutamate 254. ATP is bound by residues lysine 46, glycine 53–glycine 55, glutamate 109, alanine 112, and glutamate 117. Residues asparagine 209 and aspartate 223 each contribute to the Mg(2+) site. Residues asparagine 274 and glycine 331–methionine 333 contribute to the substrate site.

It belongs to the succinate/malate CoA ligase beta subunit family. As to quaternary structure, heterotetramer of two alpha and two beta subunits. Requires Mg(2+) as cofactor.

The enzyme catalyses succinate + ATP + CoA = succinyl-CoA + ADP + phosphate. It carries out the reaction GTP + succinate + CoA = succinyl-CoA + GDP + phosphate. It participates in carbohydrate metabolism; tricarboxylic acid cycle; succinate from succinyl-CoA (ligase route): step 1/1. Its function is as follows. Succinyl-CoA synthetase functions in the citric acid cycle (TCA), coupling the hydrolysis of succinyl-CoA to the synthesis of either ATP or GTP and thus represents the only step of substrate-level phosphorylation in the TCA. The beta subunit provides nucleotide specificity of the enzyme and binds the substrate succinate, while the binding sites for coenzyme A and phosphate are found in the alpha subunit. This is Succinate--CoA ligase [ADP-forming] subunit beta from Allorhizobium ampelinum (strain ATCC BAA-846 / DSM 112012 / S4) (Agrobacterium vitis (strain S4)).